The sequence spans 78 residues: Acyl carrier protein (78 aa).

The Carrier domain occupies 2-77; it reads SNIEERVKKI…AAIDYVTSNA (76 aa). S37 is modified (O-(pantetheine 4'-phosphoryl)serine).

Belongs to the acyl carrier protein (ACP) family. 4'-phosphopantetheine is transferred from CoA to a specific serine of apo-ACP by AcpS. This modification is essential for activity because fatty acids are bound in thioester linkage to the sulfhydryl of the prosthetic group.

The protein localises to the cytoplasm. The protein operates within lipid metabolism; fatty acid biosynthesis. Functionally, carrier of the growing fatty acid chain in fatty acid biosynthesis. This chain is Acyl carrier protein, found in Vibrio cholerae serotype O1 (strain ATCC 39315 / El Tor Inaba N16961).